A 423-amino-acid chain; its full sequence is UDP-N-acetylglucosamine 1-carboxyvinyltransferase (423 aa).

Residue 22-23 participates in phosphoenolpyruvate binding; the sequence is KN. Position 93 (R93) interacts with UDP-N-acetyl-alpha-D-glucosamine. C117 (proton donor) is an active-site residue. C117 is modified (2-(S-cysteinyl)pyruvic acid O-phosphothioketal). Residues 122-126, D308, and V330 contribute to the UDP-N-acetyl-alpha-D-glucosamine site; that span reads RPVDL.

It belongs to the EPSP synthase family. MurA subfamily.

It is found in the cytoplasm. The catalysed reaction is phosphoenolpyruvate + UDP-N-acetyl-alpha-D-glucosamine = UDP-N-acetyl-3-O-(1-carboxyvinyl)-alpha-D-glucosamine + phosphate. It participates in cell wall biogenesis; peptidoglycan biosynthesis. Its function is as follows. Cell wall formation. Adds enolpyruvyl to UDP-N-acetylglucosamine. This Finegoldia magna (strain ATCC 29328 / DSM 20472 / WAL 2508) (Peptostreptococcus magnus) protein is UDP-N-acetylglucosamine 1-carboxyvinyltransferase.